The sequence spans 129 residues: Lysozyme C (129 aa).

The C-type lysozyme domain occupies 1–129 (KVYGRCELAA…VNAWIRGCRL (129 aa)). 4 cysteine pairs are disulfide-bonded: Cys-6-Cys-127, Cys-30-Cys-115, Cys-64-Cys-80, and Cys-76-Cys-94. Active-site residues include Glu-35 and Asp-52.

It belongs to the glycosyl hydrolase 22 family. Monomer.

The protein resides in the secreted. The enzyme catalyses Hydrolysis of (1-&gt;4)-beta-linkages between N-acetylmuramic acid and N-acetyl-D-glucosamine residues in a peptidoglycan and between N-acetyl-D-glucosamine residues in chitodextrins.. In terms of biological role, lysozymes have primarily a bacteriolytic function; those in tissues and body fluids are associated with the monocyte-macrophage system and enhance the activity of immunoagents. This Syrmaticus reevesii (Reeves's pheasant) protein is Lysozyme C (LYZ).